A 1099-amino-acid polypeptide reads, in one-letter code: R3H domain-containing protein 1 (1099 aa).

Residues 111–146 (SFEKEEKPSKDEAEKEKASDKLPRKMLSRDSSQEYT) are disordered. A compositionally biased stretch (basic and acidic residues) spans 112–142 (FEKEEKPSKDEAEKEKASDKLPRKMLSRDSS). An R3H domain is found at 168–231 (RMMLLKLEQE…SVIVNKTSNT (64 aa)). Residues Ser187 and Ser262 each carry the phosphoserine modification. The region spanning 232-302 (RIPDQKFNEH…ARDRIFSQDS (71 aa)) is the SUZ domain. The tract at residues 267 to 287 (DNQMRIRLKDDRRSKSIEERE) is disordered. The residue at position 302 (Ser302) is a Phosphoserine. Residues 331-370 (RVNKDASGRSTNSHQSSTENELKYSEPRPWSSTDSDSSLR) form a disordered region. Polar residues-rich tracts occupy residues 338-349 (GRSTNSHQSSTE) and 360-370 (WSSTDSDSSLR). 3 positions are modified to phosphoserine: Ser380, Ser381, and Ser393. Disordered stretches follow at residues 387 to 439 (VLTR…SSHG), 490 to 537 (QTGQ…AANH), 583 to 625 (YIMT…HPVS), and 797 to 825 (EQVQ…PPPP). A compositionally biased stretch (low complexity) spans 391–422 (GDSSGSSKSIGRLSKTGSESSGSVGSSTGSLS). 2 stretches are compositionally biased toward pro residues: residues 519-532 (PGPP…PPQQ) and 588-611 (APPP…PGQP). Over residues 797-817 (EQVQFPRTTSPCSSQQLQGHQ) the composition is skewed to polar residues. Arg929 carries the post-translational modification Asymmetric dimethylarginine; alternate. Omega-N-methylarginine; alternate is present on Arg929. The interval 941–977 (PPAVLHGHIPNQQGQPGSRHGNRGRRQAKKAASTDLG) is disordered. A compositionally biased stretch (basic residues) spans 960–969 (HGNRGRRQAK). Ser973 is modified (phosphoserine).

The sequence is that of R3H domain-containing protein 1 (R3HDM1) from Homo sapiens (Human).